The sequence spans 1857 residues: Phosphatidylinositol 3-kinase 2 (1857 aa).

Low complexity-rich tracts occupy residues 1–32 and 42–55; these read MKMS…SNGS and NLSV…SNNS. Disordered regions lie at residues 1–61, 145–313, 348–468, 481–512, and 530–573; these read MKMS…KSST, TPLN…TNRV, SSSK…NSIR, ISSN…GERV, and ESDI…GPNV. Over residues 145-155 the composition is skewed to polar residues; it reads TPLNRSRSGSI. Positions 162–269 are enriched in low complexity; it reads NNLTSSSSSS…NNNNNNNSNS (108 aa). A compositionally biased stretch (polar residues) spans 270–281; the sequence is GGSSRMITSKSQ. 2 stretches are compositionally biased toward low complexity: residues 288 to 311 and 352 to 464; these read TSNT…TPTN and LLIP…QPSN. Low complexity predominate over residues 533–560; it reads ISSSPRSIGSPNSIRASISSQLPPSLSS. Residues 561 to 570 show a composition bias toward gly residues; that stretch reads IGGGGGGGSG. In terms of domain architecture, PI3K-RBD spans 821-934; that stretch reads PNKITIMVLL…NQTVELSLTN (114 aa). Residues 996-1078 form a disordered region; it reads KETNKENKDS…SGSGNGSEQP (83 aa). Over residues 997 to 1011 the composition is skewed to basic and acidic residues; it reads ETNKENKDSNKENKD. The segment covering 1012 to 1056 has biased composition (low complexity); it reads SSSNNNNNNNNNNNNNNNNNNNNNNNNNNNGNNNGNNSNNNSNSN. Residues 1099–1271 form the C2 PI3K-type domain; the sequence is VKRLFRVNIA…QPIILLVEFE (173 aa). Positions 1326–1503 constitute a PIK helical domain; sequence PVGLKKLDLD…GLLLEGYLRS (178 aa). One can recognise a PI3K/PI4K catalytic domain in the interval 1568–1845; that stretch reads IIDKCRYMDS…NISVALNTKT (278 aa). Positions 1574–1580 are G-loop; sequence YMDSKKL. The catalytic loop stretch occupies residues 1711-1719; sequence GIGDRHSDN. The activation loop stretch occupies residues 1730–1756; the sequence is HIDFGHFLGNYKKKYGFKRERAPFIFT.

This sequence belongs to the PI3/PI4-kinase family.

The enzyme catalyses a 1,2-diacyl-sn-glycero-3-phospho-(1D-myo-inositol) + ATP = a 1,2-diacyl-sn-glycero-3-phospho-(1D-myo-inositol-3-phosphate) + ADP + H(+). This is Phosphatidylinositol 3-kinase 2 (pikB) from Dictyostelium discoideum (Social amoeba).